Consider the following 555-residue polypeptide: Prespore protein Dp87 (555 aa).

Residues 1-22 (MRILYLASLLFLITLYLSPTFG) form the signal peptide. The DSCP-N domain occupies 27-144 (RDCESHRSEY…RIPRCVGHHG (118 aa)). Residue Asn-103 is glycosylated (N-linked (GlcNAc...) asparagine). Follistatin-like domains are found at residues 148–170 (KCDR…ACCV), 175–197 (GCGN…CRCV), 209–231 (QCRN…ATCV), 240–262 (LCRG…PVCV), 276–298 (ICGS…PTCI), 304–327 (LCNQ…VKCS), 332–354 (ECKW…PHCL), and 362–384 (LCKV…PTCI). A glycan (N-linked (GlcNAc...) asparagine) is linked at Asn-306. A glycan (N-linked (GlcNAc...) asparagine) is linked at Asn-418. A disordered region spans residues 454–555 (TTSATTAGTT…ESSESSSATS (102 aa)). Positions 470–555 (GGSTSDSSAA…ESSESSSATS (86 aa)) are enriched in low complexity.

It is found in the spore wall. In Dictyostelium discoideum (Social amoeba), this protein is Prespore protein Dp87 (cotD).